A 609-amino-acid polypeptide reads, in one-letter code: tRNA uridine 5-carboxymethylaminomethyl modification enzyme MnmG (609 aa).

FAD contacts are provided by residues 11-16 (GAGHAG), Val123, and Thr178. 270 to 284 (GPRYCPSIEDKVVRF) contacts NAD(+). Position 367 (Gln367) interacts with FAD.

This sequence belongs to the MnmG family. In terms of assembly, homodimer. Heterotetramer of two MnmE and two MnmG subunits. The cofactor is FAD.

Its subcellular location is the cytoplasm. NAD-binding protein involved in the addition of a carboxymethylaminomethyl (cmnm) group at the wobble position (U34) of certain tRNAs, forming tRNA-cmnm(5)s(2)U34. The polypeptide is tRNA uridine 5-carboxymethylaminomethyl modification enzyme MnmG (Mycoplasmopsis synoviae (strain 53) (Mycoplasma synoviae)).